The following is a 185-amino-acid chain: Potassium-transporting ATPase KdpC subunit (185 aa).

The chain crosses the membrane as a helical span at residues leucine 8–alanine 28. The interval glycine 113 to isoleucine 132 is disordered. Polar residues predominate over residues glutamine 114–serine 126.

This sequence belongs to the KdpC family. In terms of assembly, the system is composed of three essential subunits: KdpA, KdpB and KdpC.

The protein resides in the cell membrane. Part of the high-affinity ATP-driven potassium transport (or Kdp) system, which catalyzes the hydrolysis of ATP coupled with the electrogenic transport of potassium into the cytoplasm. This subunit acts as a catalytic chaperone that increases the ATP-binding affinity of the ATP-hydrolyzing subunit KdpB by the formation of a transient KdpB/KdpC/ATP ternary complex. The polypeptide is Potassium-transporting ATPase KdpC subunit (Staphylococcus haemolyticus (strain JCSC1435)).